The primary structure comprises 386 residues: Succinate--CoA ligase [ADP-forming] subunit beta (386 aa).

Residues K46, 53–55 (GRG), E99, Q102, and E107 contribute to the ATP site. 2 residues coordinate Mg(2+): N199 and D213. Substrate-binding positions include N264 and 321 to 323 (GIV).

The protein belongs to the succinate/malate CoA ligase beta subunit family. Heterotetramer of two alpha and two beta subunits. Requires Mg(2+) as cofactor.

The enzyme catalyses succinate + ATP + CoA = succinyl-CoA + ADP + phosphate. It carries out the reaction GTP + succinate + CoA = succinyl-CoA + GDP + phosphate. The protein operates within carbohydrate metabolism; tricarboxylic acid cycle; succinate from succinyl-CoA (ligase route): step 1/1. In terms of biological role, succinyl-CoA synthetase functions in the citric acid cycle (TCA), coupling the hydrolysis of succinyl-CoA to the synthesis of either ATP or GTP and thus represents the only step of substrate-level phosphorylation in the TCA. The beta subunit provides nucleotide specificity of the enzyme and binds the substrate succinate, while the binding sites for coenzyme A and phosphate are found in the alpha subunit. The polypeptide is Succinate--CoA ligase [ADP-forming] subunit beta (Ruthia magnifica subsp. Calyptogena magnifica).